Consider the following 255-residue polypeptide: L-erythrulose-1-phosphate isomerase (255 aa).

Residue histidine 98 is the Electrophile of the active site. Glutamate 171 (proton acceptor) is an active-site residue. Substrate-binding residues include glycine 177 and serine 214.

The protein belongs to the triosephosphate isomerase family. As to quaternary structure, homodimer.

It is found in the cytoplasm. The enzyme catalyses L-erythrulose 1-phosphate = D-erythrulose 4-phosphate. It functions in the pathway carbohydrate metabolism; erythritol degradation. In terms of biological role, catalyzes the isomerization of D-erythrulose-4P to L-erythrulose-1P. In Rhizobium meliloti (strain 1021) (Ensifer meliloti), this protein is L-erythrulose-1-phosphate isomerase.